Consider the following 316-residue polypeptide: Pantothenate kinase (316 aa).

An ATP-binding site is contributed by 96-103 (GSVAVGKS).

Belongs to the prokaryotic pantothenate kinase family.

The protein localises to the cytoplasm. The enzyme catalyses (R)-pantothenate + ATP = (R)-4'-phosphopantothenate + ADP + H(+). Its pathway is cofactor biosynthesis; coenzyme A biosynthesis; CoA from (R)-pantothenate: step 1/5. The polypeptide is Pantothenate kinase (Shouchella clausii (strain KSM-K16) (Alkalihalobacillus clausii)).